Reading from the N-terminus, the 2527-residue chain is Leucine-rich repeat serine/threonine-protein kinase 2 (2527 aa).

The tract at residues M1–R969 is required for RAB29-mediated activation. Residues L319–F348 adopt a coiled-coil conformation. 4 positions are modified to phosphoserine: S910, S935, S955, and S973. LRR repeat units follow at residues Y983–C1004, H1012–T1033, S1036–M1057, C1059–V1080, T1084–V1105, K1108–K1129, E1130–E1150, E1156–L1171, S1174–P1196, H1197–K1218, N1221–S1245, R1246–L1267, and N1269–L1291. S1292 is modified (phosphoserine; by autocatalysis). The Roc domain occupies K1328–F1511. Residue G1341–T1348 participates in GTP binding. S1444 carries the post-translational modification Phosphoserine. One can recognise a COR domain in the interval P1546–L1740. The 260-residue stretch at Q1879 to V2138 folds into the Protein kinase domain. Residues L1885, D1887, G1888, G1891, V1893, A1904, K1906, M1947, E1948, A1950, S1954, and R1957 each coordinate ATP. The active-site Proton acceptor is D1994. ATP contacts are provided by H1998, L2001, A2016, and D2017. E2098 to E2121 serves as a coordination point for GTP. 7 WD repeats span residues C2139–D2183, G2188–N2228, K2233–E2276, K2281–S2327, Q2333–D2377, K2402–D2438, and R2443–D2497. N2295–T2298 provides a ligand contact to GTP.

It belongs to the protein kinase superfamily. TKL Ser/Thr protein kinase family. As to quaternary structure, homodimer. Homotetramer; when activated by GTP-bound RAB29. Interacts with PRKN, PRDX3, and TPCN2. Interacts with VPS35. Interacts (via N-terminus) with RAB29; this interaction is direct and stimulates kinase activity. Interacts (via ROC domain) with SEC16A. Interacts with APP; interaction promotes phosphorylation of 'Thr-743' of APP. Interacts with MAPT. Interacts with RAB8A, RAB10, and RAB12. Interacts (via N-terminus) with RAB32. Interacts with YWHAG; this interaction is dependent on phosphorylation of Ser-910 and either Ser-935 or Ser-1444. Interacts with SFN; this interaction is dependent on phosphorylation of Ser-910 and/or Ser-935. Mg(2+) is required as a cofactor. In terms of processing, autophosphorylated at Ser-1292; autophosphorylation is stimulated by RAB29. Phosphorylation of Ser-910 and either Ser-935 or Ser-1444 facilitates interaction with YWHAG. Phosphorylation of Ser-910 and/or Ser-935 facilitates interaction with SFN. Ubiquitinated by TRIM1; undergoes 'Lys-48'-linked polyubiquitination leading to proteasomal degradation. In terms of tissue distribution, expressed in pyramidal neurons in all cortical laminae of the visual cortex, in neurons of the substantia nigra pars compacta and caudate putamen (at protein level). Expressed in neutrophils (at protein level). Expressed in the brain. Expressed throughout the adult brain, but at a lower level than in heart and liver. Also expressed in placenta, lung, skeletal muscle, kidney and pancreas. In the brain, expressed in the cerebellum, cerebral cortex, medulla, spinal cord occipital pole, frontal lobe, temporal lobe and putamen. Expression is particularly high in brain dopaminoceptive areas.

It is found in the cytoplasmic vesicle. It localises to the perikaryon. The protein resides in the golgi apparatus membrane. Its subcellular location is the cell projection. The protein localises to the axon. It is found in the dendrite. It localises to the endoplasmic reticulum membrane. The protein resides in the secretory vesicle. Its subcellular location is the synaptic vesicle membrane. The protein localises to the endosome. It is found in the lysosome. It localises to the mitochondrion outer membrane. The protein resides in the cytoplasm. Its subcellular location is the cytoskeleton. The protein localises to the phagosome. The catalysed reaction is L-threonyl-[protein] + ATP = O-phospho-L-threonyl-[protein] + ADP + H(+). It carries out the reaction L-seryl-[protein] + ATP = O-phospho-L-seryl-[protein] + ADP + H(+). It catalyses the reaction GTP + H2O = GDP + phosphate + H(+). Kinase activity is regulated by the GTPase activity of the ROC domain. GTP-bound LRRK2 kinase activity is stimulated by RAB29. Phosphorylation of RAB10 'Thr-73' is stimulated by RAB29 and RAB32. Inhibited by small molecule inhibitor MLi-2. Functionally, serine/threonine-protein kinase which phosphorylates a broad range of proteins involved in multiple processes such as neuronal plasticity, innate immunity, autophagy, and vesicle trafficking. Is a key regulator of RAB GTPases by regulating the GTP/GDP exchange and interaction partners of RABs through phosphorylation. Phosphorylates RAB3A, RAB3B, RAB3C, RAB3D, RAB5A, RAB5B, RAB5C, RAB8A, RAB8B, RAB10, RAB12, RAB29, RAB35, and RAB43. Regulates the RAB3IP-catalyzed GDP/GTP exchange for RAB8A through the phosphorylation of 'Thr-72' on RAB8A. Inhibits the interaction between RAB8A and GDI1 and/or GDI2 by phosphorylating 'Thr-72' on RAB8A. Regulates primary ciliogenesis through phosphorylation of RAB8A and RAB10, which promotes SHH signaling in the brain. Together with RAB29, plays a role in the retrograde trafficking pathway for recycling proteins, such as mannose-6-phosphate receptor (M6PR), between lysosomes and the Golgi apparatus in a retromer-dependent manner. Regulates neuronal process morphology in the intact central nervous system (CNS). Plays a role in synaptic vesicle trafficking. Plays an important role in recruiting SEC16A to endoplasmic reticulum exit sites (ERES) and in regulating ER to Golgi vesicle-mediated transport and ERES organization. Positively regulates autophagy through a calcium-dependent activation of the CaMKK/AMPK signaling pathway. The process involves activation of nicotinic acid adenine dinucleotide phosphate (NAADP) receptors, increase in lysosomal pH, and calcium release from lysosomes. Phosphorylates PRDX3. By phosphorylating APP on 'Thr-743', which promotes the production and the nuclear translocation of the APP intracellular domain (AICD), regulates dopaminergic neuron apoptosis. Acts as a positive regulator of innate immunity by mediating phosphorylation of RIPK2 downstream of NOD1 and NOD2, thereby enhancing RIPK2 activation. Independent of its kinase activity, inhibits the proteasomal degradation of MAPT, thus promoting MAPT oligomerization and secretion. In addition, has GTPase activity via its Roc domain which regulates LRRK2 kinase activity. Recruited by RAB29/RAB7L1 to overloaded lysosomes where it phosphorylates and stabilizes RAB8A and RAB10 which promote lysosomal content release and suppress lysosomal enlargement through the EHBP1 and EHBP1L1 effector proteins. The polypeptide is Leucine-rich repeat serine/threonine-protein kinase 2 (LRRK2) (Homo sapiens (Human)).